The chain runs to 273 residues: Large ribosomal subunit protein uL2cz/uL2cy (273 aa).

Disordered stretches follow at residues 1 to 20 and 224 to 254; these read MAIHLYKTSTPSTRKGAVDS and NPVDHPHGGGEGRAPIGRKKPTTPWGYPALG.

It belongs to the universal ribosomal protein uL2 family. In terms of assembly, part of the 50S ribosomal subunit.

The protein resides in the plastid. It is found in the chloroplast. The protein is Large ribosomal subunit protein uL2cz/uL2cy (rpl2-A) of Nuphar advena (Common spatterdock).